The following is a 615-amino-acid chain: Chaperone protein DnaK (615 aa).

Thr195 is subject to Phosphothreonine; by autocatalysis. The tract at residues 592–615 (EKGAQAASGKGPDDVIDADYKPAD) is disordered.

It belongs to the heat shock protein 70 family.

Functionally, acts as a chaperone. This chain is Chaperone protein DnaK, found in Thermus thermophilus (strain ATCC BAA-163 / DSM 7039 / HB27).